A 319-amino-acid polypeptide reads, in one-letter code: tRNA-cytidine(32) 2-sulfurtransferase (319 aa).

The short motif at 45–50 is the PP-loop motif element; it reads SGGKDS. The [4Fe-4S] cluster site is built by cysteine 120, cysteine 123, and cysteine 211.

Belongs to the TtcA family. In terms of assembly, homodimer. Mg(2+) is required as a cofactor. It depends on [4Fe-4S] cluster as a cofactor.

The protein resides in the cytoplasm. The catalysed reaction is cytidine(32) in tRNA + S-sulfanyl-L-cysteinyl-[cysteine desulfurase] + AH2 + ATP = 2-thiocytidine(32) in tRNA + L-cysteinyl-[cysteine desulfurase] + A + AMP + diphosphate + H(+). It functions in the pathway tRNA modification. Functionally, catalyzes the ATP-dependent 2-thiolation of cytidine in position 32 of tRNA, to form 2-thiocytidine (s(2)C32). The sulfur atoms are provided by the cysteine/cysteine desulfurase (IscS) system. This chain is tRNA-cytidine(32) 2-sulfurtransferase, found in Shewanella woodyi (strain ATCC 51908 / MS32).